The chain runs to 444 residues: N-succinylarginine dihydrolase (444 aa).

Substrate contacts are provided by residues 19-28 (AGLSFGNVAS), N110, and 137-138 (HR). E174 is a catalytic residue. R214 contributes to the substrate binding site. H250 is an active-site residue. Residues D252 and N362 each contribute to the substrate site. C368 (nucleophile) is an active-site residue.

The protein belongs to the succinylarginine dihydrolase family. As to quaternary structure, homodimer.

The catalysed reaction is N(2)-succinyl-L-arginine + 2 H2O + 2 H(+) = N(2)-succinyl-L-ornithine + 2 NH4(+) + CO2. It functions in the pathway amino-acid degradation; L-arginine degradation via AST pathway; L-glutamate and succinate from L-arginine: step 2/5. In terms of biological role, catalyzes the hydrolysis of N(2)-succinylarginine into N(2)-succinylornithine, ammonia and CO(2). The protein is N-succinylarginine dihydrolase of Shewanella denitrificans (strain OS217 / ATCC BAA-1090 / DSM 15013).